Here is a 567-residue protein sequence, read N- to C-terminus: Dihydroxy-acid dehydratase 2 (567 aa).

Cysteine 56 contacts [2Fe-2S] cluster. A Mg(2+)-binding site is contributed by aspartate 88. [2Fe-2S] cluster is bound at residue cysteine 129. Residues aspartate 130 and lysine 131 each coordinate Mg(2+). Lysine 131 bears the N6-carboxylysine mark. Cysteine 206 lines the [2Fe-2S] cluster pocket. Residue glutamate 457 participates in Mg(2+) binding. Catalysis depends on serine 483, which acts as the Proton acceptor.

This sequence belongs to the IlvD/Edd family. Homodimer. Requires [2Fe-2S] cluster as cofactor. The cofactor is Mg(2+).

It catalyses the reaction (2R)-2,3-dihydroxy-3-methylbutanoate = 3-methyl-2-oxobutanoate + H2O. It carries out the reaction (2R,3R)-2,3-dihydroxy-3-methylpentanoate = (S)-3-methyl-2-oxopentanoate + H2O. It participates in amino-acid biosynthesis; L-isoleucine biosynthesis; L-isoleucine from 2-oxobutanoate: step 3/4. The protein operates within amino-acid biosynthesis; L-valine biosynthesis; L-valine from pyruvate: step 3/4. In terms of biological role, functions in the biosynthesis of branched-chain amino acids. Catalyzes the dehydration of (2R,3R)-2,3-dihydroxy-3-methylpentanoate (2,3-dihydroxy-3-methylvalerate) into 2-oxo-3-methylpentanoate (2-oxo-3-methylvalerate) and of (2R)-2,3-dihydroxy-3-methylbutanoate (2,3-dihydroxyisovalerate) into 2-oxo-3-methylbutanoate (2-oxoisovalerate), the penultimate precursor to L-isoleucine and L-valine, respectively. The sequence is that of Dihydroxy-acid dehydratase 2 from Corynebacterium efficiens (strain DSM 44549 / YS-314 / AJ 12310 / JCM 11189 / NBRC 100395).